Here is a 387-residue protein sequence, read N- to C-terminus: MSEMNFETLQTFRRELHQIPETALEEFKTHDYLLTKLKSWQQDYMTIKTVEALPTAILVYFQGTNPVRTIGYRTDIDALPIQEATGLDFASQHPGKMHACGHDVHMTMALGLAQYFSQHQPKDNLIIFFQPAEEAESGGKVAYDMGLFEGKWRPDEFYGIHDQPNLPAGTLSTLAGTLFAGTAELKVDVIGTGGHAAYPHLAKDPIVIAAELIIQLQTVVSRSVDPIAGGVVSVGVINGGFANNVIPDQVHFEGTVRSMTRTGLETMLTRIRKIAEGLAIANEVTINVSLESGSYLPVENDPILATQVINFMQKQSDINFELAQPAMTGEDFGYLLQHIPGVMLWLGVNDSHPLHSAQLTIDESAILPGYNALKSFLLWRMATSEEK.

Aspartate 75 is a catalytic residue. The active-site Proton acceptor is the glutamate 134.

This sequence belongs to the peptidase M20A family. N-acetyldiaminopimelate deacetylase subfamily.

It catalyses the reaction N-acetyl-(2S,6S)-2,6-diaminopimelate + H2O = (2S,6S)-2,6-diaminopimelate + acetate. It functions in the pathway amino-acid biosynthesis; L-lysine biosynthesis via DAP pathway; LL-2,6-diaminopimelate from (S)-tetrahydrodipicolinate (acetylase route): step 3/3. Its function is as follows. Catalyzes the conversion of N-acetyl-diaminopimelate to diaminopimelate and acetate. In Leuconostoc citreum (strain KM20), this protein is N-acetyldiaminopimelate deacetylase.